Consider the following 305-residue polypeptide: Ribosomal RNA small subunit methyltransferase H (305 aa).

Residues 33 to 35, aspartate 51, phenylalanine 82, aspartate 96, and glutamine 103 contribute to the S-adenosyl-L-methionine site; that span reads GGY.

It belongs to the methyltransferase superfamily. RsmH family.

The protein localises to the cytoplasm. The catalysed reaction is cytidine(1402) in 16S rRNA + S-adenosyl-L-methionine = N(4)-methylcytidine(1402) in 16S rRNA + S-adenosyl-L-homocysteine + H(+). Functionally, specifically methylates the N4 position of cytidine in position 1402 (C1402) of 16S rRNA. This Rickettsia bellii (strain OSU 85-389) protein is Ribosomal RNA small subunit methyltransferase H.